Here is an 813-residue protein sequence, read N- to C-terminus: Probable receptor-like protein kinase At5g39020 (813 aa).

Residues 1-21 form the signal peptide; the sequence is MNCNVLFLLSVLVSVTAGVTA. Residues 22–437 lie on the Extracellular side of the membrane; that stretch reads AYHPTDVFLF…TPPIKGKPHV (416 aa). Asparagine 46, asparagine 61, asparagine 165, asparagine 202, asparagine 213, asparagine 263, asparagine 286, asparagine 293, asparagine 384, and asparagine 401 each carry an N-linked (GlcNAc...) asparagine glycan. Residues 438–458 form a helical membrane-spanning segment; that stretch reads LVIILIVVGSVIGLATFIVII. Topologically, residues 459-813 are cytoplasmic; that stretch reads MLLIRQMKRK…QTQTLDSTII (355 aa). One can recognise a Protein kinase domain in the interval 496-771; the sequence is KSFSHTVGKG…KVVEMIEGSL (276 aa). ATP is bound by residues 502-510 and lysine 524; that span reads VGKGGFGTV. The active-site Proton acceptor is the aspartate 619. Residues 791–813 form a disordered region; that stretch reads ESSSLSDGQEAEKQTQTLDSTII. Residues 804-813 show a composition bias toward polar residues; sequence QTQTLDSTII.

Belongs to the protein kinase superfamily. Ser/Thr protein kinase family.

The protein resides in the membrane. This is Probable receptor-like protein kinase At5g39020 from Arabidopsis thaliana (Mouse-ear cress).